Here is a 417-residue protein sequence, read N- to C-terminus: Oxidoreductase phnG (417 aa).

6-hydroxy-FAD contacts are provided by residues 16-20 (GGSYA), R61, and D317.

It belongs to the FAD-dependent oxidoreductase family. It depends on 6-hydroxy-FAD as a cofactor.

The catalysed reaction is deoxyherqueinone + NADPH + O2 + H(+) = herqueinone + NADP(+) + H2O. Its pathway is secondary metabolite biosynthesis. Its function is as follows. Oxidoreductase; part of the gene cluster that mediates the biosynthesis of phenalenones such as herqueinone, compounds that have been reported to treat tumors, bacterial infections and/or mycoses, and rheumatic diseases. The non-reducing polyketide synthase phnA synthesizes the heptaketide backbone and cyclizes it into the angular, hemiketal-containing naphtho-gamma-pyrone prephenalenone. The product template (PT) domain of phnA catalyzes only the C4-C9 aldol condensation, which is unprecedented among known PT domains. The transformation of prephenalenone to phenalenones requires an FAD-dependent monooxygenase phnB, which catalyzes the C2 aromatic hydroxylation of prephenalenone and ring opening of the gamma-pyrone ring simultaneously. Subsequent intramolecular deprotonation of C3 phenolic oxygen accelerates phenalenone ring closure to yield the tricyclic phenalenone core with a C2 hydroxylation. The prenyltransferase phnF further catalyzes reverse C-prenylation of phenalenone by direct electrophilic substitution at C6, or possibly via first a forward O-prenylation of a neighboring phenol in phenalenone, followed by a Claisen rearrangement. The hydroalkoxylation enzyme phnH catalyzes the 5-exo-trig cyclization via acid catalysis after the spontaneous deprotonation of 7-OH, which leads to the formation of the dihydrobenzofuran atrovenetin. Atrovenetin is further converted to deoxyherqueinone by the O-methyltransferase phnC which can methylate C2-OH to stabilize the northern portion of the phenalenone core. Finally, the oxidoreductase phnG converts deoxyherqueinone to herqueinone via C6 hydroxylation. The chain is Oxidoreductase phnG from Penicillium herquei.